We begin with the raw amino-acid sequence, 60 residues long: Putative SERF-like protein (60 aa).

Residues 1–53 show a composition bias toward basic and acidic residues; that stretch reads MTRGNQRDLARQKNQKKQADLTKGKRTDNLTVEQRKARDAELMREKQKKKEEA. The interval 1–60 is disordered; sequence MTRGNQRDLARQKNQKKQADLTKGKRTDNLTVEQRKARDAELMREKQKKKEEAAAAGTSK.

It belongs to the SERF family.

The polypeptide is Putative SERF-like protein (Drosophila melanogaster (Fruit fly)).